The following is a 378-amino-acid chain: Ribosomal RNA large subunit methyltransferase G (378 aa).

This sequence belongs to the methyltransferase superfamily. RlmG family.

The protein localises to the cytoplasm. It catalyses the reaction guanosine(1835) in 23S rRNA + S-adenosyl-L-methionine = N(2)-methylguanosine(1835) in 23S rRNA + S-adenosyl-L-homocysteine + H(+). Functionally, specifically methylates the guanine in position 1835 (m2G1835) of 23S rRNA. This is Ribosomal RNA large subunit methyltransferase G from Shigella boydii serotype 4 (strain Sb227).